The sequence spans 285 residues: Bifunctional protein FolD (285 aa).

Residues 165–167 (GRG), Thr-192, and Val-233 contribute to the NADP(+) site.

It belongs to the tetrahydrofolate dehydrogenase/cyclohydrolase family. As to quaternary structure, homodimer.

The catalysed reaction is (6R)-5,10-methylene-5,6,7,8-tetrahydrofolate + NADP(+) = (6R)-5,10-methenyltetrahydrofolate + NADPH. It catalyses the reaction (6R)-5,10-methenyltetrahydrofolate + H2O = (6R)-10-formyltetrahydrofolate + H(+). Its pathway is one-carbon metabolism; tetrahydrofolate interconversion. In terms of biological role, catalyzes the oxidation of 5,10-methylenetetrahydrofolate to 5,10-methenyltetrahydrofolate and then the hydrolysis of 5,10-methenyltetrahydrofolate to 10-formyltetrahydrofolate. This chain is Bifunctional protein FolD, found in Corynebacterium jeikeium (strain K411).